The following is a 61-amino-acid chain: Small ribosomal subunit protein uS14 (61 aa).

Positions 24, 27, 40, and 43 each coordinate Zn(2+).

This sequence belongs to the universal ribosomal protein uS14 family. Zinc-binding uS14 subfamily. In terms of assembly, part of the 30S ribosomal subunit. Contacts proteins S3 and S10. The cofactor is Zn(2+).

Its function is as follows. Binds 16S rRNA, required for the assembly of 30S particles and may also be responsible for determining the conformation of the 16S rRNA at the A site. This is Small ribosomal subunit protein uS14 from Desulfatibacillum aliphaticivorans.